The sequence spans 374 residues: Putative 12-oxophytodienoate reductase 5 (374 aa).

Residues Pro-30–Thr-32, Ala-63, and Gln-105 contribute to the FMN site. His-177–Asn-180 is a binding site for substrate. Tyr-182 (proton donor) is an active-site residue. Arg-229 is an FMN binding site. Arg-270 is a binding site for substrate. FMN is bound by residues Gly-300 and Gly-321–Arg-322.

It belongs to the NADH:flavin oxidoreductase/NADH oxidase family. Requires FMN as cofactor.

Its function is as follows. Putative oxophytodienoate reductase that may be involved in the biosynthesis or metabolism of oxylipin signaling molecules. The protein is Putative 12-oxophytodienoate reductase 5 (OPR5) of Oryza sativa subsp. japonica (Rice).